Reading from the N-terminus, the 1261-residue chain is Myosin-1 (1261 aa).

Residues 1 to 39 (MGHSRRPVGGEKKSRGFGRSKVADVGDGRQAGKPQVKKA) are disordered. The 680-residue stretch at 49-728 (IGVSDLTLLS…TLFALEAMRD (680 aa)) folds into the Myosin motor domain. 142-149 (GESGAGKT) lines the ATP pocket. S370 carries the post-translational modification Phosphoserine. The tract at residues 417–499 (SIGILDIYGF…PGVFAALNDA (83 aa)) is actin-binding. IQ domains are found at residues 732–752 (HNMA…RIEC) and 753–778 (AIRI…QGHQ). A TH1 domain is found at 786 to 973 (RRRMSLLGSR…KSHTIHTSPG (188 aa)). 2 disordered regions span residues 956–1093 (ASPN…KALY) and 1139–1261 (YLEE…DDEW). 4 stretches are compositionally biased toward pro residues: residues 1019 to 1029 (RPTPKPQPLPQ), 1038 to 1052 (IPAP…PVPQ), 1072 to 1084 (APPP…PPAP), and 1147 to 1159 (TPKP…PPAA). One can recognise an SH3 domain in the interval 1084 to 1145 (PKKATAKALY…PQAYLEEQVA (62 aa)). Residues 1160-1181 (PRASPVPSANGAAATAAAAKAK) are compositionally biased toward low complexity. Polar residues predominate over residues 1212–1233 (VSMNSQDSSGGSGRGTPNSTSN). Positions 1234–1243 (ASLAGGLAEA) are enriched in low complexity.

This sequence belongs to the TRAFAC class myosin-kinesin ATPase superfamily. Myosin family. Phosphorylation of the TEDS site (Ser-370) is required for the polarization of the actin cytoskeleton. Phosphorylation probably activates the myosin-I ATPase activity.

It is found in the cytoplasm. Its subcellular location is the cytoskeleton. The protein resides in the actin patch. Type-I myosin implicated in the organization of the actin cytoskeleton. Required for proper actin cytoskeleton polarization. At the cell cortex, assembles in patch-like structures together with proteins from the actin-polymerizing machinery and promotes actin assembly. Functions as actin nucleation-promoting factor (NPF) for the Arp2/3 complex. Plays an important role in polarized growth, spore germination, hyphal morphogenesis, and septal wall formation. In Aspergillus oryzae (strain ATCC 42149 / RIB 40) (Yellow koji mold), this protein is Myosin-1 (myoA).